We begin with the raw amino-acid sequence, 350 residues long: Hepatocyte nuclear factor 3-gamma (350 aa).

Residues Ala-116–Leu-207 constitute a DNA-binding region (fork-head). Positions Glu-217–Pro-276 are disordered. The span at Ala-226–Ser-249 shows a compositional bias: low complexity. Residues Pro-250–Glu-259 show a composition bias toward pro residues.

As to quaternary structure, interacts with FOXA2. Expressed in erythroleukemia and hepatoma cell lines and in liver and pancreas. Not expressed in any other cell lines or tissues examined.

The protein resides in the nucleus. In terms of biological role, transcription factor that is thought to act as a 'pioneer' factor opening the compacted chromatin for other proteins through interactions with nucleosomal core histones and thereby replacing linker histones at target enhancer and/or promoter sites. Originally described as a transcription activator for a number of liver genes such as AFP, albumin, tyrosine aminotransferase, PEPCK, etc. Interacts with the cis-acting regulatory regions of these genes. Involved in glucose homeostasis; binds to and activates transcription from the G6PC1 promoter. Binds to the CYP3A4 promoter and activates its transcription in cooperation with CEBPA. Binds to the CYP3A7 promoter together with members of the CTF/NF-I family. Involved in regulation of neuronal-specific transcription. May be involved in regulation of spermatogenesis. The polypeptide is Hepatocyte nuclear factor 3-gamma (FOXA3) (Homo sapiens (Human)).